The primary structure comprises 185 residues: Ribosome-recycling factor (185 aa).

This sequence belongs to the RRF family.

The protein resides in the cytoplasm. In terms of biological role, responsible for the release of ribosomes from messenger RNA at the termination of protein biosynthesis. May increase the efficiency of translation by recycling ribosomes from one round of translation to another. This is Ribosome-recycling factor from Desulfosudis oleivorans (strain DSM 6200 / JCM 39069 / Hxd3) (Desulfococcus oleovorans).